The primary structure comprises 290 residues: UPF0761 membrane protein YihY (290 aa).

Transmembrane regions (helical) follow at residues 44 to 64 (LLSL…FPMF), 104 to 124 (VGAC…DSAL), 140 to 160 (FAVY…SLAI), 183 to 203 (IFPL…VPTI), 210 to 230 (AIVG…GFAL), and 244 to 264 (VLAV…IVLL).

The protein belongs to the UPF0761 family.

It localises to the cell inner membrane. The protein is UPF0761 membrane protein YihY of Escherichia coli O7:K1 (strain IAI39 / ExPEC).